The following is a 352-amino-acid chain: Transcription factor MYB86 (352 aa).

2 consecutive HTH myb-type domains span residues 9 to 61 (KQKL…INYL) and 62 to 116 (RPDL…KKKL). 2 DNA-binding regions (H-T-H motif) span residues 37 to 61 (WSSV…INYL) and 89 to 112 (WSQI…NSCL).

In terms of tissue distribution, expressed in stems, flowers and seeds. Weakly expressed in leaves and roots.

The protein resides in the nucleus. Its function is as follows. Probable transcription factor. The protein is Transcription factor MYB86 (MYB86) of Arabidopsis thaliana (Mouse-ear cress).